A 360-amino-acid polypeptide reads, in one-letter code: UDP-N-acetylglucosamine--N-acetylmuramyl-(pentapeptide) pyrophosphoryl-undecaprenol N-acetylglucosamine transferase (360 aa).

UDP-N-acetyl-alpha-D-glucosamine is bound by residues Ser-198 and Gln-289.

The protein belongs to the glycosyltransferase 28 family. MurG subfamily.

It localises to the cell membrane. The catalysed reaction is Mur2Ac(oyl-L-Ala-gamma-D-Glu-L-Lys-D-Ala-D-Ala)-di-trans,octa-cis-undecaprenyl diphosphate + UDP-N-acetyl-alpha-D-glucosamine = beta-D-GlcNAc-(1-&gt;4)-Mur2Ac(oyl-L-Ala-gamma-D-Glu-L-Lys-D-Ala-D-Ala)-di-trans,octa-cis-undecaprenyl diphosphate + UDP + H(+). The protein operates within cell wall biogenesis; peptidoglycan biosynthesis. Its function is as follows. Cell wall formation. Catalyzes the transfer of a GlcNAc subunit on undecaprenyl-pyrophosphoryl-MurNAc-pentapeptide (lipid intermediate I) to form undecaprenyl-pyrophosphoryl-MurNAc-(pentapeptide)GlcNAc (lipid intermediate II). This chain is UDP-N-acetylglucosamine--N-acetylmuramyl-(pentapeptide) pyrophosphoryl-undecaprenol N-acetylglucosamine transferase, found in Streptococcus pyogenes serotype M12 (strain MGAS2096).